The following is a 485-amino-acid chain: Ribulose bisphosphate carboxylase large chain (485 aa).

The substrate site is built by Asn124 and Thr174. Lys176 serves as the catalytic Proton acceptor. Lys178 serves as a coordination point for substrate. Mg(2+)-binding residues include Lys202, Asp204, and Glu205. An N6-carboxylysine modification is found at Lys202. His294 acts as the Proton acceptor in catalysis. Substrate contacts are provided by Arg295, His327, and Ser379.

This sequence belongs to the RuBisCO large chain family. Type I subfamily. As to quaternary structure, heterohexadecamer of 8 large chains and 8 small chains. The cofactor is Mg(2+).

The enzyme catalyses 2 (2R)-3-phosphoglycerate + 2 H(+) = D-ribulose 1,5-bisphosphate + CO2 + H2O. The catalysed reaction is D-ribulose 1,5-bisphosphate + O2 = 2-phosphoglycolate + (2R)-3-phosphoglycerate + 2 H(+). Its function is as follows. RuBisCO catalyzes two reactions: the carboxylation of D-ribulose 1,5-bisphosphate, the primary event in carbon dioxide fixation, as well as the oxidative fragmentation of the pentose substrate. Both reactions occur simultaneously and in competition at the same active site. The protein is Ribulose bisphosphate carboxylase large chain of Rhodopseudomonas palustris (strain BisA53).